The chain runs to 506 residues: MQGAYCVAVALLIAASGQAAANFGLEEPHQAPDSDFMASADTIDEMLQSRVLQVSHYPKDDLMLLAGNEERMLLARSNYLTKIPIPESIMTAANTMRMEGEASAIEAASKNVNQLRSNKRQPVASILNNVARHMSTTPDSDKFLVAVENDRPLVLAKRQRSAAITENGAKFAKQDDYRPVLSGPFTTNDEASNGRHNNQLFTLKALQLDKNENAGNVEDLWQEKKVSNRDLFHLLDEYENSAYLTVVSRLEANAIEAISKNSIRLESNKGKPIAPTPNIKVDQELYAPPDTGKSPVLVSTNIPYILAKRLKNEPPSAIIYNVAGFLAQHDYRPAPSGSSAISADAPNGQLDNQLITQKAFWLDKNKHIDDVESLFKEDTVEHLSHLREGNGESAHFTAVDRQSEPIVWPKDSAVFPQPQKKVVLNEEVNKVHEAFLKAFNLPFHQYLRETVTMLGIARWKRNSSPNSRAAISTLKIFAKNVDPKKLPKLLGTDFAKLQGDKKKHVA.

An N-terminal signal peptide occupies residues 1–19 (MQGAYCVAVALLIAASGQA). Positions 50–71 (RVLQVSHYPKDDLMLLAGNEER) match the RxLR-dEER motif.

Belongs to the RxLR effector family.

The protein resides in the secreted. It localises to the host nucleus. Its function is as follows. Secreted effector that completely suppresses the host cell death induced by cell death-inducing proteins. The protein is Secreted RxLR effector protein 134 of Plasmopara viticola (Downy mildew of grapevine).